The following is a 198-amino-acid chain: MSFSPLIRQLIESLRILPGVGQKSAQRMALMLLERDRSGGLKLAQALTAAMEGVGHCRQCRTLSEEELCPQCADPRRDDSLLCVVEGPLDVFAVEQTGYRGRYFVLKGHLSPLDGLGPEAIGIPELDARIRDGAFSEVILATNPTVEGEATAHYIAQLLADRGLTLSRIAHGVPLGGELELVDGGTLAHALAGRRPIS.

The C4-type zinc-finger motif lies at 57-72 (CRQCRTLSEEELCPQC). The 95-residue stretch at 80-174 (SLLCVVEGPL…TLSRIAHGVP (95 aa)) folds into the Toprim domain.

The protein belongs to the RecR family.

In terms of biological role, may play a role in DNA repair. It seems to be involved in an RecBC-independent recombinational process of DNA repair. It may act with RecF and RecO. The chain is Recombination protein RecR from Pseudomonas paraeruginosa (strain DSM 24068 / PA7) (Pseudomonas aeruginosa (strain PA7)).